An 858-amino-acid chain; its full sequence is DNA mismatch repair protein MutS (858 aa).

An ATP-binding site is contributed by 603 to 610; it reads GPNMSGKS.

Belongs to the DNA mismatch repair MutS family.

This protein is involved in the repair of mismatches in DNA. It is possible that it carries out the mismatch recognition step. This protein has a weak ATPase activity. The protein is DNA mismatch repair protein MutS of Streptococcus agalactiae serotype Ia (strain ATCC 27591 / A909 / CDC SS700).